The primary structure comprises 169 residues: Sorting nexin-24 (169 aa).

N-acetylmethionine is present on methionine 1. Residues 1–125 enclose the PX domain; it reads MEVYIPSFRY…SFDETESEES (125 aa). Residues arginine 38, serine 40, lysine 61, and arginine 74 each coordinate a 1,2-diacyl-sn-glycero-3-phospho-(1D-myo-inositol-3-phosphate). Phosphoserine occurs at positions 113 and 116.

This sequence belongs to the sorting nexin family.

It is found in the cytoplasmic vesicle membrane. May be involved in several stages of intracellular trafficking. This is Sorting nexin-24 (SNX24) from Homo sapiens (Human).